The following is a 348-amino-acid chain: Ileal sodium/bile acid cotransporter (348 aa).

The Extracellular portion of the chain corresponds to 1 to 28; the sequence is MDNSSICNPNATICEGDSCIAPESNFNA. N-linked (GlcNAc...) asparagine glycosylation is found at Asn3 and Asn10. Residues 29 to 49 form a helical membrane-spanning segment; that stretch reads ILSVVMSTVLTILLALVMFSM. Residues 50-81 are Cytoplasmic-facing; sequence GCNVELHKFLGHLRRPWGIVVGFLCQFGIMPL. The helical transmembrane segment at 82–102 threads the bilayer; it reads TGFVLSVAFGILPVQAVVVLI. The Extracellular portion of the chain corresponds to 103–126; it reads QGCCPGGTASNILAYWVDGDMDLS. The helical transmembrane segment at 127 to 147 threads the bilayer; that stretch reads VSMTTCSTLLALGMMPLCLFI. Residues 148–157 are Cytoplasmic-facing; sequence YTKMWVDSGT. Residues 158 to 178 traverse the membrane as a helical segment; sequence IVIPYDSIGTSLVALVIPVSI. The Extracellular portion of the chain corresponds to 179–195; the sequence is GMYVNHKWPQKAKIILK. The chain crosses the membrane as a helical span at residues 196–216; it reads IGSIAGAILIVLIAVVGGILY. Over 217–224 the chain is Cytoplasmic; sequence QSAWTIEP. A helical transmembrane segment spans residues 225–245; that stretch reads KLWIIGTIYPIAGYGLGFFLA. At 246–284 the chain is on the extracellular side; it reads RIAGQPWYRCRTVALETGLQNTQLCSTIVQLSFSPEDLN. The chain crosses the membrane as a helical span at residues 285–305; the sequence is LVFTFPLIYSIFQIAFAAILL. At 306 to 348 the chain is on the cytoplasmic side; it reads GAYVAYKKCHGKNNTELQEKTDNEMEPRSSFQETNKGFQPDEK. A compositionally biased stretch (basic and acidic residues) spans 322–332; the sequence is LQEKTDNEMEP. The interval 322-348 is disordered; sequence LQEKTDNEMEPRSSFQETNKGFQPDEK. Residue Ser335 is modified to Phosphoserine.

Belongs to the bile acid:sodium symporter (BASS) (TC 2.A.28) family. In terms of assembly, monomer and homodimer. In terms of tissue distribution, mainly expressed in ileum and kidney, lower expression in jejunum.

It localises to the membrane. The catalysed reaction is taurocholate(out) + 2 Na(+)(out) = taurocholate(in) + 2 Na(+)(in). It carries out the reaction cholate(out) + 2 Na(+)(out) = cholate(in) + 2 Na(+)(in). It catalyses the reaction taurochenodeoxycholate(out) + 2 Na(+)(out) = taurochenodeoxycholate(in) + 2 Na(+)(in). The enzyme catalyses tauroursodeoxycholate(out) + 2 Na(+)(out) = tauroursodeoxycholate(in) + 2 Na(+)(in). The catalysed reaction is glycocholate(out) + 2 Na(+)(out) = glycocholate(in) + 2 Na(+)(in). It carries out the reaction tauronorcholate(out) + 2 Na(+)(out) = tauronorcholate(in) + 2 Na(+)(in). It catalyses the reaction tauroallocholate(out) + 2 Na(+)(out) = tauroallocholate(in) + 2 Na(+)(in). The enzyme catalyses taurodeoxycholate(out) + 2 Na(+)(out) = taurodeoxycholate(in) + 2 Na(+)(in). The catalysed reaction is tauro-beta-muricholate(out) + 2 Na(+)(out) = tauro-beta-muricholate(in) + 2 Na(+)(in). Functionally, plays a critical role in the sodium-dependent reabsorption of bile acids from the lumen of the small intestine. Transports various bile acids, unconjugated or conjugated, such as cholate and taurocholate. Also responsible for bile acid transport in the renal proximal tubules, a salvage mechanism that helps conserve bile acids. Works collaboratively with the Na(+)-taurocholate cotransporting polypeptide (NTCP), the organic solute transporter (OST), and the bile salt export pump (BSEP), to ensure efficacious biological recycling of bile acids during enterohepatic circulation. The sequence is that of Ileal sodium/bile acid cotransporter (SLC10A2) from Cricetulus griseus (Chinese hamster).